Here is a 229-residue protein sequence, read N- to C-terminus: Putative ankyrin repeat protein L148 (229 aa).

ANK repeat units follow at residues 70–95, 96–126, 127–156, and 157–186; these read ILDY…PDNY, IGTE…DLRI, NNDY…NCQA, and YNNA…SVAA.

The protein is Putative ankyrin repeat protein L148 of Acanthamoeba polyphaga (Amoeba).